Consider the following 69-residue polypeptide: NAD(P)H-quinone oxidoreductase subunit O (69 aa).

This sequence belongs to the complex I NdhO subunit family. NDH-1 can be composed of about 15 different subunits; different subcomplexes with different compositions have been identified which probably have different functions.

It is found in the cellular thylakoid membrane. It carries out the reaction a plastoquinone + NADH + (n+1) H(+)(in) = a plastoquinol + NAD(+) + n H(+)(out). The enzyme catalyses a plastoquinone + NADPH + (n+1) H(+)(in) = a plastoquinol + NADP(+) + n H(+)(out). NDH-1 shuttles electrons from an unknown electron donor, via FMN and iron-sulfur (Fe-S) centers, to quinones in the respiratory and/or the photosynthetic chain. The immediate electron acceptor for the enzyme in this species is believed to be plastoquinone. Couples the redox reaction to proton translocation, and thus conserves the redox energy in a proton gradient. Cyanobacterial NDH-1 also plays a role in inorganic carbon-concentration. This chain is NAD(P)H-quinone oxidoreductase subunit O, found in Acaryochloris marina (strain MBIC 11017).